The sequence spans 141 residues: Deoxyuridine 5'-triphosphate nucleotidohydrolase (141 aa).

Belongs to the dUTPase family. Mg(2+) is required as a cofactor.

The enzyme catalyses dUTP + H2O = dUMP + diphosphate + H(+). It functions in the pathway pyrimidine metabolism; dUMP biosynthesis; dUMP from dCTP (dUTP route): step 2/2. Its function is as follows. This enzyme is involved in nucleotide metabolism: it produces dUMP, the immediate precursor of thymidine nucleotides and it decreases the intracellular concentration of dUTP so that uracil cannot be incorporated into DNA. In Chlorella (PBCV-1), this protein is Deoxyuridine 5'-triphosphate nucleotidohydrolase.